The following is a 979-amino-acid chain: Disks large-associated protein 3 (979 aa).

Residues 1-10 (MRGYHGDRGS) show a composition bias toward basic and acidic residues. Disordered regions lie at residues 1–20 (MRGY…FADQ), 52–95 (AGLG…MYPG), 136–169 (FHTL…SPSR), 182–291 (AKSH…CLEG), 400–429 (AMGD…TRRS), and 537–581 (FRKA…RCSS). Position 58 is a phosphoserine (Ser58). Residues 73–86 (PEGGPAGAGVGGGS) show a composition bias toward gly residues. Positions 190–202 (PGKRDYNGPKAEG) are enriched in basic and acidic residues. Residues 203 to 218 (RGGSGGDSYPGPGSGG) show a composition bias toward gly residues. Positions 221-246 (TSHHHHHHHHHHHHQSRHGKRSKSKD) are enriched in basic residues. Phosphoserine occurs at positions 406, 409, 412, and 416. Residues 540–549 (APPPIPPGSQ) show a composition bias toward pro residues. Ser643 and Ser645 each carry phosphoserine. Disordered regions lie at residues 741–790 (EGYP…RASP) and 908–940 (EEKK…DRQR). Basic and acidic residues-rich tracts occupy residues 769–779 (GRRDSWIERGS) and 927–940 (PVKE…DRQR). A phosphoserine mark is found at Ser932, Ser935, and Ser967.

Belongs to the SAPAP family. As to quaternary structure, interacts with DLG4/PSD-95.

The protein localises to the cell membrane. The protein resides in the postsynaptic density. It localises to the synapse. Its function is as follows. May play a role in the molecular organization of synapses and neuronal cell signaling. Could be an adapter protein linking ion channel to the subsynaptic cytoskeleton. May induce enrichment of PSD-95/SAP90 at the plasma membrane. The polypeptide is Disks large-associated protein 3 (DLGAP3) (Homo sapiens (Human)).